Here is a 180-residue protein sequence, read N- to C-terminus: UPF0227 protein YcfP (180 aa).

The protein belongs to the UPF0227 family.

The protein is UPF0227 protein YcfP of Salmonella agona (strain SL483).